Consider the following 346-residue polypeptide: Outer membrane protein A (346 aa).

The signal sequence occupies residues 1-21 (MKKTAIAIAVALAGFATVAQA). The next 8 beta stranded transmembrane spans lie at 27–37 (TWYTGAKLGWS), 55–66 (QLGAGAFGGYQV), 70–78 (VGFEMGYDW), 96–107 (QGVQLTAKLGYP), 112–120 (LDIYTRLGG), 142–151 (PVFAGGVEYA), 156–163 (IATRLEYQ), and 182–190 (MLSLGVSYR). Positions 197 to 208 (APVVAPAPAPAP) are hinge-like. Tandem repeats lie at residues 201-202 (AP), 203-204 (AP), 205-206 (AP), and 207-208 (AP). The interval 201-208 (APAPAPAP) is 4 X 2 AA tandem repeats of A-P. One can recognise an OmpA-like domain in the interval 210–338 (VQTKHFTLKS…RVEIEVKGIK (129 aa)). A disulfide bridge connects residues Cys-311 and Cys-323.

It belongs to the outer membrane OOP (TC 1.B.6) superfamily. OmpA family. In terms of assembly, monomer and homodimer.

It is found in the cell outer membrane. In terms of biological role, with TolR probably plays a role in maintaining the position of the peptidoglycan cell wall in the periplasm. Acts as a porin with low permeability that allows slow penetration of small solutes; an internal gate slows down solute passage. Its function is as follows. Required for conjugation with F-type plasmids; probably serves as the mating receptor on recipient cells. In Escherichia coli O157:H7, this protein is Outer membrane protein A.